Consider the following 204-residue polypeptide: uncharacterized protein (204 aa).

This is an uncharacterized protein from Rickettsia prowazekii (strain Madrid E).